The sequence spans 282 residues: Snake venom serine protease BmSP (282 aa).

The N-terminal stretch at 1-18 is a signal peptide; that stretch reads MVLIGVLASLLILQLSYS. A propeptide spanning residues 19–56 is cleaved from the precursor; the sequence is KSLDDGAKESAYDDEIQQSSWGNSTVNTTLTETVVIQL. N-linked (GlcNAc...) asparagine glycosylation is found at asparagine 41 and asparagine 45. Positions 57–280 constitute a Peptidase S1 domain; sequence IMGGSECYKS…YIDWIKGIIA (224 aa). 5 disulfide bridges follow: cysteine 63–cysteine 195, cysteine 82–cysteine 98, cysteine 174–cysteine 241, cysteine 206–cysteine 220, and cysteine 231–cysteine 256. Residue histidine 97 is the Charge relay system of the active site. N-linked (GlcNAc...) asparagine glycosylation is present at asparagine 135. Residue aspartate 142 is the Charge relay system of the active site. Asparagine 149 and asparagine 153 each carry an N-linked (GlcNAc...) asparagine glycan. Residue serine 235 is the Charge relay system of the active site.

The protein belongs to the peptidase S1 family. Snake venom subfamily. As to quaternary structure, monomer. Expressed by the venom gland.

The protein localises to the secreted. In terms of biological role, snake venom serine protease that may act in the hemostasis system of the prey. This Bungarus multicinctus (Many-banded krait) protein is Snake venom serine protease BmSP.